A 133-amino-acid polypeptide reads, in one-letter code: Small ribosomal subunit protein uS11 (133 aa).

It belongs to the universal ribosomal protein uS11 family. In terms of assembly, part of the 30S ribosomal subunit. Interacts with proteins S7 and S18. Binds to IF-3.

Functionally, located on the platform of the 30S subunit, it bridges several disparate RNA helices of the 16S rRNA. Forms part of the Shine-Dalgarno cleft in the 70S ribosome. The protein is Small ribosomal subunit protein uS11 of Brevibacillus brevis (strain 47 / JCM 6285 / NBRC 100599).